We begin with the raw amino-acid sequence, 329 residues long: Putative dehydrogenase RB0419 (329 aa).

The protein belongs to the ornithine cyclodeaminase/mu-crystallin family.

The polypeptide is Putative dehydrogenase RB0419 (Rhizobium meliloti (strain 1021) (Ensifer meliloti)).